Consider the following 629-residue polypeptide: UvrABC system protein C (629 aa).

Positions 26 to 105 (TSPGIYQFKN…IKELKPRYNV (80 aa)) constitute a GIY-YIG domain. The 36-residue stretch at 219 to 254 (SALIRSLTENMHLAATELRFEQAAEIKAQIESLKRY) folds into the UVR domain.

Belongs to the UvrC family. Interacts with UvrB in an incision complex.

The protein resides in the cytoplasm. In terms of biological role, the UvrABC repair system catalyzes the recognition and processing of DNA lesions. UvrC both incises the 5' and 3' sides of the lesion. The N-terminal half is responsible for the 3' incision and the C-terminal half is responsible for the 5' incision. This is UvrABC system protein C from Chlorobium chlorochromatii (strain CaD3).